The following is a 531-amino-acid chain: Acetate CoA-transferase YdiF (531 aa).

E333 (5-glutamyl coenzyme A thioester intermediate) is an active-site residue.

Belongs to the 3-oxoacid CoA-transferase family. In terms of assembly, homotetramer; dimer of dimers.

The enzyme catalyses an acyl-CoA + acetate = a carboxylate + acetyl-CoA. Functionally, coA transferase having broad substrate specificity for short-chain acyl-CoA thioesters with the activity decreasing when the length of the carboxylic acid chain exceeds four carbons. May play a role in short-chain fatty acid metabolism in E.coli. The polypeptide is Acetate CoA-transferase YdiF (ydiF) (Escherichia coli (strain K12)).